Reading from the N-terminus, the 1378-residue chain is Tonsoku-like protein (1378 aa).

8 TPR repeats span residues alanine 27–alanine 60, alanine 67–leucine 100, glutamine 107–glutamate 147, threonine 162–asparagine 195, phenylalanine 202–methionine 235, serine 242–lysine 275, methionine 311–leucine 344, and alanine 352–asparagine 385. The segment at alanine 475 to arginine 524 is disordered. The segment covering glutamate 481–glutamate 509 has biased composition (acidic residues). Over residues leucine 514–asparagine 523 the composition is skewed to basic residues. ANK repeat units follow at residues methionine 528 to proline 557, cysteine 561 to aspartate 590, and glutamate 597 to leucine 626. Residues alanine 667–arginine 789 are disordered. Residues aspartate 672–serine 684 are compositionally biased toward polar residues. The segment covering threonine 691–proline 702 has biased composition (pro residues). Serine 719 is modified (phosphoserine). Composition is skewed to low complexity over residues glycine 736–alanine 753 and alanine 777–arginine 789. An Omega-N-methylarginine modification is found at arginine 797. A disordered region spans residues leucine 842–isoleucine 933. Composition is skewed to polar residues over residues cysteine 883 to alanine 899 and serine 907 to serine 918. LRR repeat units follow at residues histidine 1069 to alanine 1093, methionine 1097 to leucine 1122, leucine 1128 to serine 1151, alanine 1188 to serine 1212, glycine 1247 to arginine 1270, cysteine 1275 to threonine 1300, and alanine 1331 to glutamine 1354.

It belongs to the Tonsoku family. As to quaternary structure, component of the MMS22L-TONSL complex, a complex at least composed of MMS22L and TONSL/NFKBIL2. Interacts with the MCM complex, the FACT complex and the RPA complex. Interacts with MCM5; the interaction is direct. Binds histones, with a strong preference for histone H3.1 (histones H3.1 and H3-4/H3.1t). Interacts (via ANK repeats) with histone H4; specifically binds histone H4 lacking methylation at 'Lys-20' (H4K20me0). May interact with DNAJC9; the interaction seems to be histone-dependent. Expressed in heart, skeletal muscle and tracheal epithelial cells.

Its subcellular location is the nucleus. The protein localises to the chromosome. It is found in the cytoplasm. In terms of biological role, component of the MMS22L-TONSL complex, a complex that promotes homologous recombination-mediated repair of double-strand breaks (DSBs) at stalled or collapsed replication forks. The MMS22L-TONSL complex is required to maintain genome integrity during DNA replication. It mediates the assembly of RAD51 filaments on single-stranded DNA (ssDNA): the MMS22L-TONSL complex is recruited to DSBs following histone replacement by histone chaperones and eviction of the replication protein A complex (RPA/RP-A) from DSBs. Following recruitment to DSBs, the TONSL-MMS22L complex promotes recruitment of RAD51 filaments and subsequent homologous recombination. Within the complex, TONSL acts as a histone reader, which recognizes and binds newly synthesized histones following their replacement by histone chaperones. Specifically binds histone H4 lacking methylation at 'Lys-20' (H4K20me0) and histone H3.1. This is Tonsoku-like protein from Homo sapiens (Human).